Reading from the N-terminus, the 154-residue chain is Crossover junction endodeoxyribonuclease RuvC (154 aa).

Active-site residues include D7, E67, and D139. D7, E67, and D139 together coordinate Mg(2+).

It belongs to the RuvC family. Homodimer which binds Holliday junction (HJ) DNA. The HJ becomes 2-fold symmetrical on binding to RuvC with unstacked arms; it has a different conformation from HJ DNA in complex with RuvA. In the full resolvosome a probable DNA-RuvA(4)-RuvB(12)-RuvC(2) complex forms which resolves the HJ. Requires Mg(2+) as cofactor.

It is found in the cytoplasm. The enzyme catalyses Endonucleolytic cleavage at a junction such as a reciprocal single-stranded crossover between two homologous DNA duplexes (Holliday junction).. In terms of biological role, the RuvA-RuvB-RuvC complex processes Holliday junction (HJ) DNA during genetic recombination and DNA repair. Endonuclease that resolves HJ intermediates. Cleaves cruciform DNA by making single-stranded nicks across the HJ at symmetrical positions within the homologous arms, yielding a 5'-phosphate and a 3'-hydroxyl group; requires a central core of homology in the junction. The consensus cleavage sequence is 5'-(A/T)TT(C/G)-3'. Cleavage occurs on the 3'-side of the TT dinucleotide at the point of strand exchange. HJ branch migration catalyzed by RuvA-RuvB allows RuvC to scan DNA until it finds its consensus sequence, where it cleaves and resolves the cruciform DNA. This is Crossover junction endodeoxyribonuclease RuvC from Synechococcus sp. (strain CC9902).